Consider the following 325-residue polypeptide: MKDNILKRSFHHSKFENIKELVKLKEKQDVKISLAFPSLNEEKTIGKEIIIMKSELMEKYPLLDEIAVIDSGSEDETVSIAKEYGAKVFYSSDILPEYGFYKGKGENLWKSLYALDGDIIVWVDSDIENIHPKFVYGLVGALLNYPEIGYVKAFYDRPIVGKSAMQPTGGGRVTELVARPLFSLFYPELSTIIQPLSGEYAGRREILEKLPFFVGYGVEIAHLIDIAEKFGSEIIAQVDLELRIHDNQPLHSLSKMAFELTKVVLKRLEKYGKLDLNTELTDKHIMIQKKENEKVLVPTEILSVERPPMITIPEYKEKFSKEEKV.

UDP-alpha-D-glucose-binding positions include 37–41 (PSLNE), Ser-71, Lys-104, and 124–125 (DS). Asp-126 is a binding site for Mn(2+). 171–174 (GRVT) is a (2R)-3-phosphoglycerate binding site. UDP-alpha-D-glucose contacts are provided by residues 216-219 (YGVE) and 243-248 (RIHDNQ). Residue His-245 coordinates Mn(2+). Position 247 (Asn-247) interacts with (2R)-3-phosphoglycerate.

The protein belongs to the glycosyltransferase 2 family. In terms of assembly, homodimer in solution. Co(2+) serves as cofactor. Mg(2+) is required as a cofactor. Requires Mn(2+) as cofactor. It depends on Ni(2+) as a cofactor. The cofactor is Zn(2+).

The enzyme catalyses an NDP-alpha-D-glucose + (2R)-3-phosphoglycerate = (2R)-2-O-(alpha-D-glucopyranosyl)-3-phospho-glycerate + a ribonucleoside 5'-diphosphate + H(+). It carries out the reaction (2R)-3-phosphoglycerate + UDP-alpha-D-glucose = (2R)-2-O-(alpha-D-glucopyranosyl)-3-phospho-glycerate + UDP + H(+). The catalysed reaction is ADP-alpha-D-glucose + (2R)-3-phosphoglycerate = (2R)-2-O-(alpha-D-glucopyranosyl)-3-phospho-glycerate + ADP + H(+). With respect to regulation, inhibited by ADP and EDTA. Its function is as follows. Involved in the biosynthesis of the compatible solute mannosylglucosylglycerate through a phosphorylating pathway. Catalyzes the transfer of the glucose moiety from a nuleotide sugar such as UDP-alpha-D-glucose to the position 2 of 3-phospho-D-glycerate (3-PGA) to form glucosyl-3-phosphoglycerate (GPG). UDP-glucose is the preferred substrate, but it can be partially replaced by ADP-glucose. The protein is Glucosyl-3-phosphoglycerate synthase of Petrotoga mobilis (strain DSM 10674 / SJ95).